The following is a 213-amino-acid chain: Protein-L-isoaspartate O-methyltransferase (213 aa).

Ser64 is an active-site residue.

The protein belongs to the methyltransferase superfamily. L-isoaspartyl/D-aspartyl protein methyltransferase family.

Its subcellular location is the cytoplasm. The enzyme catalyses [protein]-L-isoaspartate + S-adenosyl-L-methionine = [protein]-L-isoaspartate alpha-methyl ester + S-adenosyl-L-homocysteine. In terms of biological role, catalyzes the methyl esterification of L-isoaspartyl residues in peptides and proteins that result from spontaneous decomposition of normal L-aspartyl and L-asparaginyl residues. It plays a role in the repair and/or degradation of damaged proteins. This chain is Protein-L-isoaspartate O-methyltransferase, found in Flavobacterium psychrophilum (strain ATCC 49511 / DSM 21280 / CIP 103535 / JIP02/86).